Reading from the N-terminus, the 198-residue chain is GTP cyclohydrolase 1 (198 aa).

Zn(2+)-binding residues include Cys87, His90, and Cys158.

This sequence belongs to the GTP cyclohydrolase I family. In terms of assembly, homomer.

The enzyme catalyses GTP + H2O = 7,8-dihydroneopterin 3'-triphosphate + formate + H(+). Its pathway is cofactor biosynthesis; 7,8-dihydroneopterin triphosphate biosynthesis; 7,8-dihydroneopterin triphosphate from GTP: step 1/1. The chain is GTP cyclohydrolase 1 from Janthinobacterium sp. (strain Marseille) (Minibacterium massiliensis).